Consider the following 186-residue polypeptide: Der GTPase-activating protein YihI (186 aa).

The disordered stretch occupies residues 42–77; that stretch reads KAREDKKKRKHKGLASGSRHSAVEEKANKLQNEIKD. Over residues 62–77 the composition is skewed to basic and acidic residues; that stretch reads SAVEEKANKLQNEIKD.

It belongs to the YihI family. Interacts with Der.

A GTPase-activating protein (GAP) that modifies Der/EngA GTPase function. May play a role in ribosome biogenesis. The protein is Der GTPase-activating protein YihI of Haemophilus influenzae (strain ATCC 51907 / DSM 11121 / KW20 / Rd).